The sequence spans 37 residues: Diptericin (37 aa).

The tract at residues 1–37 is disordered; it reads DLHIPPPDNKINWPQLSGGGGGSPKTGYDININAQQK.

Belongs to the attacin/sarcotoxin-2 family. Synthesized by the fat body and secreted into the hemolymph.

The protein localises to the secreted. Its function is as follows. Acute phase protein with antibacterial activity against the Gram-negative bacteria E.coli (MIC=6.25 ug/ml) and S.sonnei (MIC=12.5 ug/ml). Lacks antibacterial activity against the Gram-negative bacteria P.vulgaris, P.rettgeri and P.aeruginosa, and against the Gram-positive bacteria B.subtilis, S.aureus, M.luteus, B.megaterium, C.bovis and E.cloacae. The polypeptide is Diptericin (Sarcophaga peregrina (Flesh fly)).